The chain runs to 520 residues: Glycosyl hydrolase family 109 protein 5 (520 aa).

An N-terminal signal peptide occupies residues 1-27 (MRTFKSLMISLCMGTTLCMCLPQTTTA). NAD(+) is bound by residues 77–78 (MR), Asp-99, 147–150 (WLHH), 167–168 (EV), and Asn-196. Substrate is bound by residues Tyr-225, Arg-248, 260-263 (YATH), and Tyr-338. Residue Tyr-260 participates in NAD(+) binding.

This sequence belongs to the Gfo/Idh/MocA family. Glycosyl hydrolase 109 subfamily. NAD(+) is required as a cofactor.

Glycosidase. In Phocaeicola vulgatus (strain ATCC 8482 / DSM 1447 / JCM 5826 / CCUG 4940 / NBRC 14291 / NCTC 11154) (Bacteroides vulgatus), this protein is Glycosyl hydrolase family 109 protein 5.